The following is a 411-amino-acid chain: Carbamoyl phosphate synthase arginine-specific small chain (411 aa).

Residues S50, G232, and G234 each coordinate L-glutamine. Positions 185–376 constitute a Glutamine amidotransferase type-1 domain; that stretch reads NVALIDCGVK…FDNIEKYQLQ (192 aa). C264 serves as the catalytic Nucleophile. Residues L265, Q268, N306, G308, and Y309 each contribute to the L-glutamine site. Active-site residues include H349 and E351.

It belongs to the CarA family. In terms of assembly, heterodimer composed of 2 chains; the small (or glutamine) chain promotes the hydrolysis of glutamine to ammonia, which is used by the large (or ammonia) chain to synthesize carbamoyl phosphate.

It localises to the cytoplasm. The enzyme catalyses hydrogencarbonate + L-glutamine + 2 ATP + H2O = carbamoyl phosphate + L-glutamate + 2 ADP + phosphate + 2 H(+). The catalysed reaction is L-glutamine + H2O = L-glutamate + NH4(+). The protein operates within amino-acid biosynthesis; L-arginine biosynthesis; carbamoyl phosphate from bicarbonate: step 1/1. In terms of biological role, small subunit of the arginine-specific carbamoyl phosphate synthase (CPSase). CPSase catalyzes the formation of carbamoyl phosphate from the ammonia moiety of glutamine, carbonate, and phosphate donated by ATP, constituting the first step of 2 biosynthetic pathways, one leading to arginine and/or urea and the other to pyrimidine nucleotides. The small subunit (glutamine amidotransferase) binds and cleaves glutamine to supply the large subunit with the substrate ammonia. The polypeptide is Carbamoyl phosphate synthase arginine-specific small chain (CPA1) (Saccharomyces cerevisiae (strain ATCC 204508 / S288c) (Baker's yeast)).